We begin with the raw amino-acid sequence, 439 residues long: MKKLLLTASIICLASAGLAEENPTPVISNSDTEIKLEGFYLFESGYIKQDHLILFDKNVTDNRKKLGFYTEAAFAATISKTINDVIAGAKIVLQPTTRVKTSASYNGSHIFIETSYGKVELGSPVDASAKLRVTGSQVTAGTGGWYRYALLDGQYMRYNGLKPDFDTSASFYLESYSNSFDQINEKTEKARRLNFFTPKMKGFQAGISYTPDTANTGGNKDINNLTLESSGRNGVSVSRTGIKTVSLGNGETMTINQNIRDAFSAGLTYEHEISEDADLKLSVTGEYGKPARRLVHAKMEGTKVIEVLNTYKLSNLKAYNLGAVFTYGNFSCGASYGSLGKSLTAKEYYKVGRDTYYYNGAVAYGQGPIKTSLEYLKTSRYKNTVDAVSLATEYKIMPGLLPYAEISHFQAKGKPVYYPEAPSKTTRGTVGLIGTKLKF.

An N-terminal signal peptide occupies residues 1-19 (MKKLLLTASIICLASAGLA).

This is an uncharacterized protein from Rickettsia felis (strain ATCC VR-1525 / URRWXCal2) (Rickettsia azadi).